The primary structure comprises 432 residues: Glycosyltransferase 6 (432 aa).

Residues 1-18 (MGKPGGAKTRTAVCLSDG) are Cytoplasmic-facing. Residues 19 to 39 (VFFLAGAFMSLTLVWSYFSIF) traverse the membrane as a helical; Signal-anchor for type II membrane protein segment. Over 40–432 (SPSFTSLRHD…LPFDYPNEAW (393 aa)) the chain is Lumenal. N-linked (GlcNAc...) asparagine glycosylation occurs at asparagine 315.

It belongs to the glycosyltransferase 34 family.

It localises to the golgi apparatus membrane. In terms of biological role, probable glycosyltransferase that may be involved in the biosynthesis of xyloglucan. The protein is Glycosyltransferase 6 (GT6) of Arabidopsis thaliana (Mouse-ear cress).